Here is an 81-residue protein sequence, read N- to C-terminus: MKAGIHPDYKKVVFMDTNTGFKFLSGSTRGSNETVEWEDGNTYPLLKVEISSDSHPFYTGRQKFATADGRVDRFNKKYGLK.

The protein belongs to the bacterial ribosomal protein bL31 family. Type B subfamily. As to quaternary structure, part of the 50S ribosomal subunit.

The chain is Large ribosomal subunit protein bL31B from Bacillus cereus (strain ATCC 10987 / NRS 248).